The primary structure comprises 523 residues: Tryptophan 6-halogenase SttH (523 aa).

FAD contacts are provided by Gly14, Ser40, Ile43, Val46, Val48, and Ala51. The active site involves Lys79. An L-tryptophan-binding site is contributed by Pro97. FAD is bound by residues Val203 and Leu354. 2 residues coordinate chloride: Thr365 and Gly366. Ile367 contacts FAD. Residues Tyr456 and Tyr457 each contribute to the L-tryptophan site.

It belongs to the flavin-dependent halogenase family. Bacterial tryptophan halogenase subfamily. In terms of assembly, homodimer.

It carries out the reaction L-tryptophan + FADH2 + chloride + O2 = 6-chloro-L-tryptophan + FAD + 2 H2O. It catalyses the reaction D-tryptophan + FADH2 + chloride + O2 = 6-chloro-D-tryptophan + FAD + 2 H2O. Catalyzes the chlorination of tryptophan (Trp) at C6 position to yield 6-chloro-tryptophan. Accepts both L and D-Trp as the substrates. The enzyme also uses bromide to yield 6-bromo-Trp. In vitro, can also catalyze the halogenation of 3-indolepropionic acid, N-methyltryptophan and non-indolic aromatic substrates such as kynurenine, anthranilamide and N-phenylanthranilic acid. The chain is Tryptophan 6-halogenase SttH from Streptomyces toxytricini (Actinomyces toxytricini).